Consider the following 638-residue polypeptide: Transcription activator MSS11 (638 aa).

Positions 1–26 are disordered; it reads MSKPPPQHQSKNANNSLSSPVSDKQS. Over residues 8-26 the composition is skewed to polar residues; the sequence is HQSKNANNSLSSPVSDKQS. One can recognise a LisH domain in the interval 29-61; the sequence is SRQLLLAHLYNYFKTNGLEETAQALLIECNNTI. 4 disordered regions span residues 187-216, 270-331, 362-515, and 572-638; these read LSTT…EQLQ, QQRQ…NAVS, NNQQ…NNNK, and MPPN…PGYE. Over residues 283–295 the composition is skewed to polar residues; the sequence is STSSQKSPVINNG. Composition is skewed to low complexity over residues 296–328, 369–387, and 394–408; these read QPQQ…NNTN, SQQQ…QSSP, and QPKN…TTTS. Residues 412–423 are compositionally biased toward basic residues; the sequence is KSSRKQQPKNSR. Low complexity predominate over residues 425–465; that stretch reads QSVQQQQQQQPQQQPQQSQQMSTSSQSFTAANNSNNVNNTF. Positions 466 to 481 are enriched in polar residues; sequence DISPQIQDQGMLSTKE. 2 stretches are compositionally biased toward low complexity: residues 495–515 and 572–585; these read SQPQ…NNNK and MPPN…PSQS. Residues 586–595 show a composition bias toward gly residues; that stretch reads GDGGGGGGGS.

Belongs to the MSS11 family. Interacts with FLO8.

The protein localises to the cytoplasm. Its subcellular location is the nucleus. In terms of biological role, transcription factor that regulates pseudohyphal differentiation, invasive growth, floculation, adhesion and starch metabolism in response to nutrient availability. The protein is Transcription activator MSS11 (MSS11) of Candida albicans (strain SC5314 / ATCC MYA-2876) (Yeast).